We begin with the raw amino-acid sequence, 268 residues long: Ribosomal RNA large subunit methyltransferase E (268 aa).

S-adenosyl-L-methionine contacts are provided by glycine 50, tryptophan 52, aspartate 68, aspartate 84, and aspartate 109. Lysine 149 acts as the Proton acceptor in catalysis. Positions 196-254 (PLRKGDKFVVDIEKLGSSGDGAVLIEGFVVFVKEVEVGEKVRIKISDVKPNFAFADVEE) constitute a TRAM domain.

It belongs to the class I-like SAM-binding methyltransferase superfamily. RNA methyltransferase RlmE family.

Its subcellular location is the cytoplasm. It catalyses the reaction uridine(2552) in 23S rRNA + S-adenosyl-L-methionine = 2'-O-methyluridine(2552) in 23S rRNA + S-adenosyl-L-homocysteine + H(+). Functionally, specifically methylates the uridine in position 2552 of 23S rRNA at the 2'-O position of the ribose in the fully assembled 50S ribosomal subunit. This chain is Ribosomal RNA large subunit methyltransferase E, found in Methanosarcina mazei (strain ATCC BAA-159 / DSM 3647 / Goe1 / Go1 / JCM 11833 / OCM 88) (Methanosarcina frisia).